Here is a 309-residue protein sequence, read N- to C-terminus: Isoaspartyl peptidase/L-asparaginase (309 aa).

Thr166 serves as the catalytic Nucleophile. Substrate contacts are provided by residues Arg194–Asp197 and Thr217–Gly220.

This sequence belongs to the Ntn-hydrolase family. Heterodimer of an alpha and beta chain produced by autocleavage. Cleaved into an alpha and beta chain by autocatalysis; this activates the enzyme. The N-terminal residue of the beta subunit is responsible for the nucleophile hydrolase activity.

The protein resides in the cytoplasm. It catalyses the reaction L-asparagine + H2O = L-aspartate + NH4(+). It carries out the reaction Cleavage of a beta-linked Asp residue from the N-terminus of a polypeptide.. Has both L-asparaginase and beta-aspartyl peptidase activity. Does not have aspartylglucosaminidase activity and is inactive toward GlcNAc-L-Asn. Likewise, has no activity toward glutamine. The chain is Isoaspartyl peptidase/L-asparaginase (asrgl1) from Xenopus laevis (African clawed frog).